The sequence spans 776 residues: Glutathione biosynthesis bifunctional protein GshAB (776 aa).

Positions M1–I354 are glutamate--cysteine ligase. Positions K521–F775 constitute an ATP-grasp domain. Position 548 to 606 (S548 to R606) interacts with ATP. Positions 728, 745, and 747 each coordinate Mg(2+). Residues D728, E745, and N747 each contribute to the Mn(2+) site.

This sequence in the N-terminal section; belongs to the glutamate--cysteine ligase type 1 family. Type 2 subfamily. In terms of assembly, monomer. Mg(2+) serves as cofactor. Mn(2+) is required as a cofactor.

It carries out the reaction L-cysteine + L-glutamate + ATP = gamma-L-glutamyl-L-cysteine + ADP + phosphate + H(+). The catalysed reaction is gamma-L-glutamyl-L-cysteine + glycine + ATP = glutathione + ADP + phosphate + H(+). It participates in sulfur metabolism; glutathione biosynthesis; glutathione from L-cysteine and L-glutamate: step 1/2. Its pathway is sulfur metabolism; glutathione biosynthesis; glutathione from L-cysteine and L-glutamate: step 2/2. In terms of biological role, synthesizes glutathione from L-glutamate and L-cysteine via gamma-L-glutamyl-L-cysteine. The polypeptide is Glutathione biosynthesis bifunctional protein GshAB (Listeria welshimeri serovar 6b (strain ATCC 35897 / DSM 20650 / CCUG 15529 / CIP 8149 / NCTC 11857 / SLCC 5334 / V8)).